The sequence spans 202 residues: Arenicin-2 (202 aa).

Positions 1-25 (MTSTQSVAVYATLILAIFCFNDIHC) are cleaved as a signal peptide. Residues 26–181 (DPIAEARAAA…SGDNNEPEKR (156 aa)) constitute a propeptide that is removed on maturation. In terms of domain architecture, BRICHOS spans 73-168 (GDGVEGSVMV…ACQGKSVYWL (96 aa)). 2 disulfides stabilise this stretch: Cys100-Cys160 and Cys184-Cys201.

Its function is as follows. Has antimicrobial activity against the Gram-negative bacteria E.coli and P.mirabilis, the Gram-positive bacterium L.monocytogenes and the yeast C.albicans. The chain is Arenicin-2 from Arenicola marina (Lugworm).